A 455-amino-acid polypeptide reads, in one-letter code: ATP-dependent protease ATPase subunit HslU (455 aa).

Residues Ile19 and 61-66 (GVGKTE) contribute to the ATP site. The interval 144–163 (ESKVGFANEPAEDAASKKEK) is disordered. 3 residues coordinate ATP: Asp268, Glu333, and Arg405.

It belongs to the ClpX chaperone family. HslU subfamily. A double ring-shaped homohexamer of HslV is capped on each side by a ring-shaped HslU homohexamer. The assembly of the HslU/HslV complex is dependent on binding of ATP.

The protein resides in the cytoplasm. Functionally, ATPase subunit of a proteasome-like degradation complex; this subunit has chaperone activity. The binding of ATP and its subsequent hydrolysis by HslU are essential for unfolding of protein substrates subsequently hydrolyzed by HslV. HslU recognizes the N-terminal part of its protein substrates and unfolds these before they are guided to HslV for hydrolysis. The chain is ATP-dependent protease ATPase subunit HslU from Francisella tularensis subsp. holarctica (strain FTNF002-00 / FTA).